The primary structure comprises 237 residues: Endonuclease NucS (237 aa).

Belongs to the NucS endonuclease family.

It localises to the cytoplasm. In terms of biological role, cleaves both 3' and 5' ssDNA extremities of branched DNA structures. This Saccharolobus islandicus (strain L.S.2.15 / Lassen #1) (Sulfolobus islandicus) protein is Endonuclease NucS.